The primary structure comprises 157 residues: 3-hydroxyacyl-[acyl-carrier-protein] dehydratase FabZ (157 aa).

Histidine 58 is an active-site residue.

It belongs to the thioester dehydratase family. FabZ subfamily.

It is found in the cytoplasm. The catalysed reaction is a (3R)-hydroxyacyl-[ACP] = a (2E)-enoyl-[ACP] + H2O. Its function is as follows. Involved in unsaturated fatty acids biosynthesis. Catalyzes the dehydration of short chain beta-hydroxyacyl-ACPs and long chain saturated and unsaturated beta-hydroxyacyl-ACPs. The sequence is that of 3-hydroxyacyl-[acyl-carrier-protein] dehydratase FabZ from Brucella abortus biovar 1 (strain 9-941).